Consider the following 98-residue polypeptide: Large ribosomal subunit protein uL23 (98 aa).

It belongs to the universal ribosomal protein uL23 family. As to quaternary structure, part of the 50S ribosomal subunit. Contacts protein L29, and trigger factor when it is bound to the ribosome.

Functionally, one of the early assembly proteins it binds 23S rRNA. One of the proteins that surrounds the polypeptide exit tunnel on the outside of the ribosome. Forms the main docking site for trigger factor binding to the ribosome. The chain is Large ribosomal subunit protein uL23 from Streptococcus sanguinis (strain SK36).